Consider the following 160-residue polypeptide: Cytochrome c-type biogenesis protein CcmE (160 aa).

The Cytoplasmic segment spans residues 1–7 (MTRKQRR). Residues 8–28 (LFMIFGALGTLGVAVGLILFA) traverse the membrane as a helical; Signal-anchor for type II membrane protein segment. Over 29 to 160 (LSDNIVFFYG…TQGAAAPLIR (132 aa)) the chain is Periplasmic. Heme-binding residues include H122 and Y126. Positions 140–160 (VWQEDGQAKPATQGAAAPLIR) are disordered.

The protein belongs to the CcmE/CycJ family.

Its subcellular location is the cell inner membrane. Functionally, heme chaperone required for the biogenesis of c-type cytochromes. Transiently binds heme delivered by CcmC and transfers the heme to apo-cytochromes in a process facilitated by CcmF and CcmH. The protein is Cytochrome c-type biogenesis protein CcmE of Beijerinckia indica subsp. indica (strain ATCC 9039 / DSM 1715 / NCIMB 8712).